We begin with the raw amino-acid sequence, 23 residues long: Chaperonin GroEL (23 aa).

It belongs to the chaperonin (HSP60) family. As to quaternary structure, forms a cylinder of 14 subunits composed of two heptameric rings stacked back-to-back. Interacts with the co-chaperonin GroES. In terms of processing, phosphorylated on threonine.

It is found in the cytoplasm. It catalyses the reaction ATP + H2O + a folded polypeptide = ADP + phosphate + an unfolded polypeptide.. Together with its co-chaperonin GroES, plays an essential role in assisting protein folding. The GroEL-GroES system forms a nano-cage that allows encapsulation of the non-native substrate proteins and provides a physical environment optimized to promote and accelerate protein folding. The protein is Chaperonin GroEL of Acidithiobacillus ferrooxidans (Thiobacillus ferrooxidans).